The sequence spans 414 residues: Protein FAM81B (414 aa).

Residues 1–13 are compositionally biased toward polar residues; the sequence is MTSETDINKSASP. The segment at 1–43 is disordered; it reads MTSETDINKSASPTAAAKEQPEEPDGPLPGSASEQEKKVRFSP. Coiled coils occupy residues 70–94, 121–149, 188–223, and 266–414; these read NTQR…LEQA, LLEN…QIKA, KLSG…NLDT, and LNLY…LQES.

This sequence belongs to the FAM81 family.

In Bos taurus (Bovine), this protein is Protein FAM81B (FAM81B).